We begin with the raw amino-acid sequence, 237 residues long: Chloride intracellular channel protein 3 (237 aa).

The segment at 1–89 (MAETTKLQLF…EEFLEETLGP (89 aa)) is required for insertion into the membrane. One can recognise a GST N-terminal domain in the interval 13–91 (ASEDGESVGH…FLEETLGPPD (79 aa)). The short motif at 23-26 (CPSC) is the G-site element. Residues Cys23 and Cys26 are joined by a disulfide bond. Residues 25–45 (SCQRLFMVLLLKGVPFTLTTV) form a helical membrane-spanning segment. Residues 69–236 (DGDVKTDTLQ…LAAYQPAVHP (168 aa)) enclose the GST C-terminal domain. Ser160 bears the Phosphoserine mark.

The protein belongs to the chloride channel CLIC family. As to quaternary structure, associated with the C-terminal of MAPK15.

The protein localises to the nucleus. It is found in the membrane. Its subcellular location is the cell membrane. It localises to the cytoplasm. The protein resides in the secreted. The protein localises to the extracellular space. It is found in the extracellular matrix. It carries out the reaction chloride(in) = chloride(out). In terms of biological role, in the soluble state, catalyzes glutaredoxin-like thiol disulfide exchange reactions with reduced glutathione as electron donor. Reduced in a glutathione-dependent way and secreted into the extracellular matrix where it activates TGM2 and promotes blood vessel growth during tissue remodeling as occurs in tumorigenesis. Can reduce specific cysteines in TGM2 and regulate cofactor binding. Can insert into membranes and form outwardly rectifying chloride ion channels. May participate in cellular growth control. The polypeptide is Chloride intracellular channel protein 3 (Mus musculus (Mouse)).